Consider the following 412-residue polypeptide: UV DNA damage endonuclease (412 aa).

It belongs to the uve1/UvsE family.

In terms of biological role, component in a DNA repair pathway. Removal of UV LIGHT damaged nucleotides. Recognizes pyrimidine dimers and cleave a phosphodiester bond immediately 5' to the lesion. The sequence is that of UV DNA damage endonuclease from Clostridium perfringens (strain 13 / Type A).